Reading from the N-terminus, the 392-residue chain is Potassium/proton antiporter CemA (392 aa).

A run of 4 helical transmembrane segments spans residues F174 to L194, S269 to L289, F316 to I336, and F352 to I372.

It belongs to the CemA family.

Its subcellular location is the plastid. The protein resides in the chloroplast inner membrane. The enzyme catalyses K(+)(in) + H(+)(out) = K(+)(out) + H(+)(in). In terms of biological role, contributes to K(+)/H(+) antiport activity by supporting proton efflux to control proton extrusion and homeostasis in chloroplasts in a light-dependent manner to modulate photosynthesis. Prevents excessive induction of non-photochemical quenching (NPQ) under continuous-light conditions. Indirectly promotes efficient inorganic carbon uptake into chloroplasts. The sequence is that of Potassium/proton antiporter CemA from Nephroselmis olivacea (Green alga).